A 359-amino-acid polypeptide reads, in one-letter code: Squamosa promoter-binding-like protein 13A (359 aa).

The disordered stretch occupies residues 75–94 (AKPEGSRSSSSKRTRGNGVG). An SBP-type zinc finger spans residues 98–175 (MPICLVDGCD…DGHNRRRRKP (78 aa)). 8 residues coordinate Zn(2+): C101, C106, C123, H126, C142, C145, H149, and C161. Residues 158–174 (KRSCRKRLDGHNRRRRK) carry the Bipartite nuclear localization signal motif.

The cofactor is Zn(2+).

It localises to the nucleus. Its function is as follows. Trans-acting factor that binds specifically to the consensus nucleotide sequence 5'-TNCGTACAA-3'. This is Squamosa promoter-binding-like protein 13A (SPL13A) from Arabidopsis thaliana (Mouse-ear cress).